The following is a 123-amino-acid chain: SPbeta prophage-derived uncharacterized protein YorE (123 aa).

This chain is SPbeta prophage-derived uncharacterized protein YorE (yorE), found in Bacillus subtilis (strain 168).